The primary structure comprises 1282 residues: Clustered mitochondria protein homolog (1282 aa).

A disordered region spans residues 1–50 (MADASQATTPAAEGNPVPEVPETQTPPADVNGTTEQEQTEEGAEQALEDQ). The span at 16–36 (PVPEVPETQTPPADVNGTTEQ) shows a compositional bias: low complexity. The segment covering 37 to 47 (EQTEEGAEQAL) has biased composition (acidic residues). One can recognise a Clu domain in the interval 331-575 (DNTRSQETYL…RITPLDIAWM (245 aa)). Residues 623-650 (EEKKEGEEATEEAKTEEIKTEEAEKSEE) are a coiled coil. Composition is skewed to basic and acidic residues over residues 624-661 (EKKE…KTEE) and 668-680 (VAEK…AKED). Disordered stretches follow at residues 624–680 (EKKE…AKED) and 913–945 (PVAE…TSPV). 3 TPR repeats span residues 1021-1054 (AQMY…AERT), 1063-1096 (VLNY…WKVI), and 1105-1138 (ITTM…CNKV). The interval 1257–1282 (VENSEKKKGGKKSKGPSNPKKRGGKA) is disordered. Over residues 1264–1282 (KGGKKSKGPSNPKKRGGKA) the composition is skewed to basic residues.

The protein belongs to the CLU family. As to quaternary structure, may associate with the eukaryotic translation initiation factor 3 (eIF-3) complex.

It localises to the cytoplasm. Its function is as follows. mRNA-binding protein involved in proper cytoplasmic distribution of mitochondria. The sequence is that of Clustered mitochondria protein homolog from Neurospora crassa (strain ATCC 24698 / 74-OR23-1A / CBS 708.71 / DSM 1257 / FGSC 987).